The chain runs to 204 residues: Cytochrome c oxidase subunit 3 (204 aa).

The next 5 membrane-spanning stretches (helical) occupy residues 12 to 32, 56 to 76, 101 to 121, 133 to 153, and 171 to 191; these read YGNLLLMLGFLLMIMTMIQWW, GMMLFIVSEICFFFAFFWAYF, FQIPLLNTAILLSSGVSVTWA, AIHSMTITITLGFYFTFLQMM, and FFVATGFHGLHVIIGSTFLFM.

This sequence belongs to the cytochrome c oxidase subunit 3 family. In terms of assembly, component of the cytochrome c oxidase (complex IV, CIV), a multisubunit enzyme composed of a catalytic core of 3 subunits and several supernumerary subunits. The complex exists as a monomer or a dimer and forms supercomplexes (SCs) in the inner mitochondrial membrane with ubiquinol-cytochrome c oxidoreductase (cytochrome b-c1 complex, complex III, CIII).

The protein localises to the mitochondrion inner membrane. It carries out the reaction 4 Fe(II)-[cytochrome c] + O2 + 8 H(+)(in) = 4 Fe(III)-[cytochrome c] + 2 H2O + 4 H(+)(out). Its function is as follows. Component of the cytochrome c oxidase, the last enzyme in the mitochondrial electron transport chain which drives oxidative phosphorylation. The respiratory chain contains 3 multisubunit complexes succinate dehydrogenase (complex II, CII), ubiquinol-cytochrome c oxidoreductase (cytochrome b-c1 complex, complex III, CIII) and cytochrome c oxidase (complex IV, CIV), that cooperate to transfer electrons derived from NADH and succinate to molecular oxygen, creating an electrochemical gradient over the inner membrane that drives transmembrane transport and the ATP synthase. Cytochrome c oxidase is the component of the respiratory chain that catalyzes the reduction of oxygen to water. Electrons originating from reduced cytochrome c in the intermembrane space (IMS) are transferred via the dinuclear copper A center (CU(A)) of subunit 2 and heme A of subunit 1 to the active site in subunit 1, a binuclear center (BNC) formed by heme A3 and copper B (CU(B)). The BNC reduces molecular oxygen to 2 water molecules using 4 electrons from cytochrome c in the IMS and 4 protons from the mitochondrial matrix. This Enteroctopus dofleini (North Pacific giant octopus) protein is Cytochrome c oxidase subunit 3 (COIII).